The sequence spans 312 residues: MACAAVMIPGLLRCSVGAIRIEAASLRLTLSTLRHLTLTSIMKSKRKTDHMERTASVLRREIVSAAKVCGAASESPSVKSLRLLVADQDFSFKAGQWVDFFIPGVSVVGGFSICSSPRLLEQERVIELAVKYTNHPPALWVHNTCTLDCEVAVRVGGEFFFDPQPADASRNLVLIAGGVGINPLLSILRHAADLLREQANKRNGYEIGTIKLFYSAKNTSELLFKKNILDLVNEFPEKIACSLHVTKQTTQINAELKPYITEGRITEKEIRDHISKETLFYICGPPPMTDFFSKQLENNHVPKEHICFEKWW.

The signal sequence occupies residues 1–17 (MACAAVMIPGLLRCSVG). The 137-residue stretch at 50-186 (HMERTASVLR…GGVGINPLLS (137 aa)) folds into the FAD-binding FR-type domain. 178–183 (GVGINP) provides a ligand contact to NAD(+).

In Homo sapiens (Human), this protein is Oxidoreductase NAD-binding domain-containing protein 1 (OXNAD1).